We begin with the raw amino-acid sequence, 111 residues long: Protein GLUTAMINE DUMPER 6 (111 aa).

Residues 1–16 (MRPTPKVEIWKSPVPY) lie on the Extracellular side of the membrane. A helical transmembrane segment spans residues 17-37 (LFGGLFLLVLLIALALLSLVC). The Cytoplasmic portion of the chain corresponds to 38–111 (THQKPSSSSN…NCDNVTVIST (74 aa)). Residues 40–49 (QKPSSSSNNN) show a composition bias toward polar residues. The disordered stretch occupies residues 40–63 (QKPSSSSNNNHMDEEDDVGDKDAK). The VIMAG; degenerate signature appears at 75–79 (VILAG).

This sequence belongs to the GLUTAMINE DUMPER 1 (TC 9.B.60) family. In terms of tissue distribution, expressed in the vascular tissues.

The protein resides in the membrane. In terms of biological role, probable subunit of an amino acid transporter involved in the regulation of the amino acid metabolism. Stimulates amino acid export by activating nonselective amino acid facilitators. This Arabidopsis thaliana (Mouse-ear cress) protein is Protein GLUTAMINE DUMPER 6 (GDU6).